Here is a 299-residue protein sequence, read N- to C-terminus: DNA-binding transcriptional activator HetR (299 aa).

Residue Ser152 is part of the active site.

This sequence belongs to the peptidase S48 family. In terms of assembly, homodimer; disulfide-linked.

In terms of biological role, might be involved in temporal and/or spatial regulation of nitrogen fixation. Dimerization is required for DNA-binding. Has both a protease and a DNA-binding activity. This chain is DNA-binding transcriptional activator HetR, found in Leptolyngbya boryana (Plectonema boryanum).